The following is a 100-amino-acid chain: UPF0213 protein YhbQ (100 aa).

Residues 2-77 enclose the GIY-YIG domain; sequence TPWYLYLIRT…KQLTKRQKER (76 aa).

It belongs to the UPF0213 family.

This Salmonella arizonae (strain ATCC BAA-731 / CDC346-86 / RSK2980) protein is UPF0213 protein YhbQ.